A 124-amino-acid polypeptide reads, in one-letter code: Transcription initiation factor TFIID subunit 13 (124 aa).

A compositionally biased stretch (acidic residues) spans 1 to 16 (MADEEEDPTFEEENEE). The interval 1 to 28 (MADEEEDPTFEEENEEIGGGAEGGQGKR) is disordered. A Histone-fold domain is found at 32 to 74 (FSKELRCMMYGFGDDQNPYTESVDILEDLVIEFITEMTHKAMS).

The protein belongs to the TAF13 family. Component of the TFIID basal transcription factor complex, composed of TATA-box-binding protein TBP, and a number of TBP-associated factors (TAFs), including TAF1, TAF2, TAF3, TAF4, TAF5, TAF6, TAF7, TAF8, TAF9, TAF10, TAF11, TAF12 and TAF13. Interacts with TBP, and more strongly with TAF10 and TAF11.

The protein localises to the nucleus. Its function is as follows. The TFIID basal transcription factor complex plays a major role in the initiation of RNA polymerase II (Pol II)-dependent transcription. TFIID recognizes and binds promoters via its subunit TBP, a TATA-box-binding protein, and promotes assembly of the pre-initiation complex (PIC). The TFIID complex consists of TBP and TBP-associated factors (TAFs), including TAF1, TAF2, TAF3, TAF4, TAF5, TAF6, TAF7, TAF8, TAF9, TAF10, TAF11, TAF12 and TAF13. TAF13, together with TAF11 and TBP, play key roles during promoter binding by the TFIID and TFIIA transcription factor complexes. The sequence is that of Transcription initiation factor TFIID subunit 13 from Bos taurus (Bovine).